Here is a 214-residue protein sequence, read N- to C-terminus: 3-demethoxyubiquinol 3-hydroxylase (214 aa).

Residues Glu63, Glu93, His96, Glu145, Glu177, and His180 each contribute to the Fe cation site.

Belongs to the COQ7 family. Fe cation serves as cofactor.

The protein resides in the cell membrane. It carries out the reaction a 5-methoxy-2-methyl-3-(all-trans-polyprenyl)benzene-1,4-diol + AH2 + O2 = a 3-demethylubiquinol + A + H2O. It functions in the pathway cofactor biosynthesis; ubiquinone biosynthesis. Functionally, catalyzes the hydroxylation of 2-nonaprenyl-3-methyl-6-methoxy-1,4-benzoquinol during ubiquinone biosynthesis. In Psychrobacter cryohalolentis (strain ATCC BAA-1226 / DSM 17306 / VKM B-2378 / K5), this protein is 3-demethoxyubiquinol 3-hydroxylase.